The following is a 395-amino-acid chain: F-box protein At5g46170 (395 aa).

One can recognise an F-box domain in the interval 24–72 (IDHFDHLPDSILLLVFNKIGDVKALGRCCVVSRRFHSLVPQVDNVVVRV). The segment at 122–158 (TKRSSSSCGGSGSSSSSLSISGDDDGGEIEQGGVTHH) is disordered. The segment covering 125 to 142 (SSSSCGGSGSSSSSLSIS) has biased composition (low complexity).

This chain is F-box protein At5g46170, found in Arabidopsis thaliana (Mouse-ear cress).